The chain runs to 319 residues: Annexin A5 (319 aa).

Ala2 is modified (N-acetylalanine). 4 Annexin repeats span residues 13 to 84, 85 to 156, 168 to 240, and 244 to 315; these read FDGR…ALMK, PSRL…VLLQ, AQVE…AVVK, and SIPA…LLCG. Lys27 participates in a covalent cross-link: Glycyl lysine isopeptide (Lys-Gly) (interchain with G-Cter in SUMO1); alternate. Lys27 participates in a covalent cross-link: Glycyl lysine isopeptide (Lys-Gly) (interchain with G-Cter in SUMO2); alternate. Ser35 bears the Phosphoserine mark. An N6-acetyllysine mark is found at Lys68, Lys74, Lys77, Lys95, and Lys99. Residue Lys288 is modified to N6-succinyllysine. A [IL]-x-C-x-x-[DE] motif motif is present at residues 312–318; it reads LLCGGED.

The protein belongs to the annexin family. In terms of assembly, monomer. Binds ATRX, EIF5B and DNMT1. S-nitrosylation is induced by interferon-gamma and oxidatively-modified low-densitity lipoprotein (LDL(ox)) possibly implicating the iNOS-S100A8/9 transnitrosylase complex.

In terms of biological role, this protein is an anticoagulant protein that acts as an indirect inhibitor of the thromboplastin-specific complex, which is involved in the blood coagulation cascade. In Rattus norvegicus (Rat), this protein is Annexin A5 (Anxa5).